We begin with the raw amino-acid sequence, 369 residues long: Peptide chain release factor 1 (369 aa).

An N5-methylglutamine modification is found at Gln238.

This sequence belongs to the prokaryotic/mitochondrial release factor family. In terms of processing, methylated by PrmC. Methylation increases the termination efficiency of RF1.

The protein localises to the cytoplasm. In terms of biological role, peptide chain release factor 1 directs the termination of translation in response to the peptide chain termination codons UAG and UAA. The sequence is that of Peptide chain release factor 1 from Parabacteroides distasonis (strain ATCC 8503 / DSM 20701 / CIP 104284 / JCM 5825 / NCTC 11152).